Here is a 188-residue protein sequence, read N- to C-terminus: Josephin-2 (188 aa).

The 178-residue stretch at 11-188 (PPTVYHERQR…EEKGSWLRTD (178 aa)) folds into the Josephin domain. The active-site Nucleophile is Cys-24. The active-site Proton acceptor is His-125.

Its subcellular location is the cytoplasm. The protein resides in the cytosol. The catalysed reaction is Thiol-dependent hydrolysis of ester, thioester, amide, peptide and isopeptide bonds formed by the C-terminal Gly of ubiquitin (a 76-residue protein attached to proteins as an intracellular targeting signal).. In terms of biological role, cleaves 'Lys-63'-linked poly-ubiquitin chains, and with lesser efficiency 'Lys-48'-linked poly-ubiquitin chains (in vitro). May act as a deubiquitinating enzyme. The polypeptide is Josephin-2 (JOSD2) (Homo sapiens (Human)).